The sequence spans 300 residues: MKFLLDVLLLLPLLIVCSLESFVKLFIPKRRKSVTGEIVLITGAGHGIGRLTAYEFAKLKSKLVLWDINKHGLEETAAKCKGLGAKVHTFVVDCSNREDIYSAAKKVKAEIGDVSILVNNAGVVYTSDLFATQDPQIEKTFEVNVLAHFWTTKAFLPAMMKNNHGHIVTVASAAGHVSVPFLLAYCSSKFAAVGFHKTLTDELAALQITGVKTTCLCPNFVNTGFIKNPSTSLGPTLEPEEVVNRLMHGILTEQKMIFIPSSIAFLTTLERILPERFLAVLKRKISVKFDAVIGYRMKAQ.

A signal peptide spans 1-19; sequence MKFLLDVLLLLPLLIVCSL. Residue 40–64 coordinates NADP(+); the sequence is LITGAGHGIGRLTAYEFAKLKSKLV. Serine 172 contributes to the substrate binding site. The active-site Proton acceptor is the tyrosine 185.

The protein belongs to the short-chain dehydrogenases/reductases (SDR) family. 17-beta-HSD 3 subfamily.

The protein resides in the endoplasmic reticulum. Its subcellular location is the lipid droplet. It carries out the reaction 17beta-estradiol + NAD(+) = estrone + NADH + H(+). The enzyme catalyses 17beta-estradiol + NADP(+) = estrone + NADPH + H(+). Its function is as follows. Can convert androstan-3-alpha,17-beta-diol (3-alpha-diol) to androsterone in vitro, suggesting that it may participate in androgen metabolism during steroidogenesis. May act by metabolizing compounds that stimulate steroid synthesis and/or by generating metabolites that inhibit it. Has no activity toward DHEA (dehydroepiandrosterone), or A-dione (4-androste-3,17-dione), and only a slight activity toward testosterone to A-dione. This is Estradiol 17-beta-dehydrogenase 11 (HSD17B11) from Pongo abelii (Sumatran orangutan).